Here is a 733-residue protein sequence, read N- to C-terminus: Phosphoribosylformylglycinamidine synthase subunit PurL (733 aa).

The active site involves histidine 41. 2 residues coordinate ATP: tyrosine 44 and lysine 83. Glutamate 85 is a binding site for Mg(2+). Substrate-binding positions include 86 to 89 and arginine 108; that span reads SHNH. The active-site Proton acceptor is the histidine 87. Aspartate 109 contacts Mg(2+). A disordered region spans residues 212-232; that stretch reads GASFASQELSEESEEKRPSVQ. Glutamine 232 lines the substrate pocket. Aspartate 260 is a Mg(2+) binding site. Position 304-306 (304-306) interacts with substrate; it reads ESQ. Residues aspartate 488 and glycine 525 each contribute to the ATP site. Asparagine 526 provides a ligand contact to Mg(2+). Serine 528 is a substrate binding site.

The protein belongs to the FGAMS family. In terms of assembly, monomer. Part of the FGAM synthase complex composed of 1 PurL, 1 PurQ and 2 PurS subunits.

The protein resides in the cytoplasm. The catalysed reaction is N(2)-formyl-N(1)-(5-phospho-beta-D-ribosyl)glycinamide + L-glutamine + ATP + H2O = 2-formamido-N(1)-(5-O-phospho-beta-D-ribosyl)acetamidine + L-glutamate + ADP + phosphate + H(+). The protein operates within purine metabolism; IMP biosynthesis via de novo pathway; 5-amino-1-(5-phospho-D-ribosyl)imidazole from N(2)-formyl-N(1)-(5-phospho-D-ribosyl)glycinamide: step 1/2. Its function is as follows. Part of the phosphoribosylformylglycinamidine synthase complex involved in the purines biosynthetic pathway. Catalyzes the ATP-dependent conversion of formylglycinamide ribonucleotide (FGAR) and glutamine to yield formylglycinamidine ribonucleotide (FGAM) and glutamate. The FGAM synthase complex is composed of three subunits. PurQ produces an ammonia molecule by converting glutamine to glutamate. PurL transfers the ammonia molecule to FGAR to form FGAM in an ATP-dependent manner. PurS interacts with PurQ and PurL and is thought to assist in the transfer of the ammonia molecule from PurQ to PurL. The polypeptide is Phosphoribosylformylglycinamidine synthase subunit PurL (Caldanaerobacter subterraneus subsp. tengcongensis (strain DSM 15242 / JCM 11007 / NBRC 100824 / MB4) (Thermoanaerobacter tengcongensis)).